We begin with the raw amino-acid sequence, 167 residues long: MASFIDPNQLDLEDQVVSINRVTKVVKGGRRLRFAAIAIVGDKNGHVGFATGKAQEVPEAIRKAVDAAKKSLIEVPIVGTTIPHEVIGHFGAGEVLLKPAEEGSGVAAGGAIRSVMELAGIADITSKSLGRNTPINMIRATMDGLTQLRTREQVAELRGVSASSLED.

One can recognise an S5 DRBM domain in the interval leucine 12 to valine 75.

Belongs to the universal ribosomal protein uS5 family. As to quaternary structure, part of the 30S ribosomal subunit. Contacts proteins S4 and S8.

With S4 and S12 plays an important role in translational accuracy. Its function is as follows. Located at the back of the 30S subunit body where it stabilizes the conformation of the head with respect to the body. This chain is Small ribosomal subunit protein uS5, found in Lacticaseibacillus paracasei (strain ATCC 334 / BCRC 17002 / CCUG 31169 / CIP 107868 / KCTC 3260 / NRRL B-441) (Lactobacillus paracasei).